Consider the following 500-residue polypeptide: POU domain, class 3, transcription factor 3 (500 aa).

Over residues 32–52 (GGGGGGGGGGGGAGGGGGGMQ) the composition is skewed to gly residues. 4 disordered regions span residues 32 to 63 (GGGGGGGGGGGGAGGGGGGMQPGSAAVTSGAY), 122 to 190 (WSGS…WGAA), 231 to 319 (NGML…TPTS), and 461 to 500 (EKRMTPPGIQQQTPDDVYSQVGTVSADTPPPHHGLQTSVQ). Pro residues-rich tracts occupy residues 134–146 (QQPPQPPPPPPQG) and 171–181 (HLGPPPPPPHQ). The span at 241–251 (GGGGGGAGGGA) shows a compositional bias: gly residues. The span at 270-287 (HHHHHHHHAHPHPPHPHH) shows a compositional bias: basic residues. Residues 293-303 (HHGGGGGGAGP) show a composition bias toward gly residues. One can recognise a POU-specific domain in the interval 314–388 (EDTPTSDDLE…LLNKWLEEAD (75 aa)). Positions 406–465 (KRKKRTSIEVSVKGALESHFLKCPKPSAQEITNLADSLQLEKEVVRVWFCNRRQKEKRMT) form a DNA-binding region, homeobox. A compositionally biased stretch (polar residues) spans 468–486 (GIQQQTPDDVYSQVGTVSA).

It belongs to the POU transcription factor family. Class-3 subfamily. In terms of assembly, homodimer. In terms of tissue distribution, brain.

The protein resides in the nucleus. In terms of biological role, transcription factor that acts synergistically with SOX11 and SOX4. Plays a role in neuronal development. Is implicated in an enhancer activity at the embryonic met-mesencephalic junction; the enhancer element contains the octamer motif (5'-ATTTGCAT-3'). The sequence is that of POU domain, class 3, transcription factor 3 from Homo sapiens (Human).